A 458-amino-acid polypeptide reads, in one-letter code: Protochlorophyllide reductase, chloroplastic (458 aa).

It belongs to the short-chain dehydrogenases/reductases (SDR) family. POR subfamily.

Its subcellular location is the plastid. It is found in the chloroplast. The enzyme catalyses chlorophyllide a + NADP(+) = protochlorophyllide a + NADPH + H(+). Its pathway is porphyrin-containing compound metabolism; chlorophyll biosynthesis. Its function is as follows. Phototransformation of protochlorophyllide (Pchlide) to chlorophyllide (Chlide). In Marchantia paleacea (Liverwort), this protein is Protochlorophyllide reductase, chloroplastic (PORA).